The following is a 90-amino-acid chain: Small ribosomal subunit protein uS19 (90 aa).

The protein belongs to the universal ribosomal protein uS19 family.

In terms of biological role, protein S19 forms a complex with S13 that binds strongly to the 16S ribosomal RNA. In Nitrosococcus oceani (strain ATCC 19707 / BCRC 17464 / JCM 30415 / NCIMB 11848 / C-107), this protein is Small ribosomal subunit protein uS19.